A 578-amino-acid polypeptide reads, in one-letter code: Triokinase/FMN cyclase (578 aa).

The region spanning 9–336 (SVEGCADDAL…IDAETTAKAW (328 aa)) is the DhaK domain. Residues 56-59 (GSGH), Lys109, and Asp114 each bind dihydroxyacetone. The active-site Tele-hemiaminal-histidine intermediate is His221. One can recognise a DhaL domain in the interval 372–571 (KQMALVLDRI…AAAIFRAILE (200 aa)). ATP is bound by residues 401–404 (DGDC), 446–447 (SS), Gly486, and 494–495 (TM). Ser511 and Ser545 each carry phosphoserine. ATP is bound at residue 556-558 (DPG).

The protein belongs to the dihydroxyacetone kinase (DAK) family. Homodimer. Interacts with IFIH1 (via the CARD domains), the interaction is inhibited by viral infection. Mg(2+) serves as cofactor. Requires Mn(2+) as cofactor. Co(2+) is required as a cofactor.

The enzyme catalyses dihydroxyacetone + ATP = dihydroxyacetone phosphate + ADP + H(+). The catalysed reaction is D-glyceraldehyde + ATP = D-glyceraldehyde 3-phosphate + ADP + H(+). It catalyses the reaction FAD = riboflavin cyclic-4',5'-phosphate + AMP + H(+). With respect to regulation, each activity is inhibited by the substrate(s) of the other. Functionally, catalyzes both the phosphorylation of dihydroxyacetone and of glyceraldehyde, and the splitting of ribonucleoside diphosphate-X compounds among which FAD is the best substrate. Represses IFIH1-mediated cellular antiviral response. This is Triokinase/FMN cyclase from Mus musculus (Mouse).